A 223-amino-acid polypeptide reads, in one-letter code: Putative synaptogyrin-2 like protein (223 aa).

N-acetylmethionine is present on M1. S3 is subject to Phosphoserine. An MARVEL domain is found at 20 to 170 (FLTQPQVVAR…LASLTYQRYK (151 aa)). The next 4 membrane-spanning stretches (helical) occupy residues 26 to 46 (VVAR…IYGE), 71 to 91 (GSAI…DAYF), 104 to 124 (VIGD…GFCF), and 146 to 166 (AAIT…SLTY). Residues 197–223 (ASVDNYQQPPFTQNAETTEGYQPPPVY) form a disordered region. The span at 200 to 216 (DNYQQPPFTQNAETTEG) shows a compositional bias: polar residues.

This sequence belongs to the synaptogyrin family.

It localises to the membrane. The chain is Putative synaptogyrin-2 like protein from Homo sapiens (Human).